A 157-amino-acid polypeptide reads, in one-letter code: Phosphopantetheine adenylyltransferase (157 aa).

Substrate is bound at residue threonine 8. Residues 8–9 (TF) and histidine 16 contribute to the ATP site. The substrate site is built by lysine 40, threonine 72, and arginine 86. ATP is bound by residues 87–89 (GLR), glutamate 97, and 122–128 (YSFLSSS).

It belongs to the bacterial CoaD family. Homohexamer. It depends on Mg(2+) as a cofactor.

Its subcellular location is the cytoplasm. The enzyme catalyses (R)-4'-phosphopantetheine + ATP + H(+) = 3'-dephospho-CoA + diphosphate. It participates in cofactor biosynthesis; coenzyme A biosynthesis; CoA from (R)-pantothenate: step 4/5. Its function is as follows. Reversibly transfers an adenylyl group from ATP to 4'-phosphopantetheine, yielding dephospho-CoA (dPCoA) and pyrophosphate. This chain is Phosphopantetheine adenylyltransferase, found in Prochlorococcus marinus (strain MIT 9312).